A 186-amino-acid polypeptide reads, in one-letter code: Protein GrpE (186 aa).

The segment covering 1 to 15 has biased composition (polar residues); it reads MADEQQTLDQQTPEQ. Residues 1–20 are disordered; sequence MADEQQTLDQQTPEQPTGAA.

It belongs to the GrpE family. In terms of assembly, homodimer.

The protein localises to the cytoplasm. Its function is as follows. Participates actively in the response to hyperosmotic and heat shock by preventing the aggregation of stress-denatured proteins, in association with DnaK and GrpE. It is the nucleotide exchange factor for DnaK and may function as a thermosensor. Unfolded proteins bind initially to DnaJ; upon interaction with the DnaJ-bound protein, DnaK hydrolyzes its bound ATP, resulting in the formation of a stable complex. GrpE releases ADP from DnaK; ATP binding to DnaK triggers the release of the substrate protein, thus completing the reaction cycle. Several rounds of ATP-dependent interactions between DnaJ, DnaK and GrpE are required for fully efficient folding. This Pseudomonas aeruginosa (strain UCBPP-PA14) protein is Protein GrpE.